The primary structure comprises 468 residues: MLKQAESMLKWAIEKDNYTTSEKIGLNDYRHVHESLGIGFIALEDIKEDEKLVSFKKDSVLCLTNSDLAQLPEVQSLPSWAALLLVMATENASPNSFWRPYLSIFPTKERITSPFYWDENKKDALLRGTVLESNEDCNEITQLWIDRIEPIIKLYPNRFSQVSYEDFLRMSAVMLAYSFDIEKTKSPISNENEKSAAETSIKEDKNGDAAKKNEGSANQDDEKLHSQSLVGNNCEVNSEDEFSDLESEVDPDELEKAMCPISDMFNGDDELCNIRLYDINGTLTMIATRDIKKGEQLWNTYGELDNSELFRKYGFTKKKGTPHDFVLIKKEHWLPEYIEKLGFEEVEARLELLCREELLYNLEGDFTFSKADLTFKEICLAFVLMEKEKELISVPSKSDIKPKHYRKLLKIIEKRINMYPKISDPKNFDEENAKTLIEGEIDILQNLSAKVKEALTKNRPKKKQKVDH.

An SET domain is found at 22-302; sequence EKIGLNDYRH…KGEQLWNTYG (281 aa). A disordered region spans residues 188–225; sequence ISNENEKSAAETSIKEDKNGDAAKKNEGSANQDDEKLH. Tyr-301 lines the S-adenosyl-L-methionine pocket.

This sequence belongs to the class V-like SAM-binding methyltransferase superfamily. Histone-lysine methyltransferase family. SETD6 subfamily.

It is found in the nucleus. In terms of biological role, S-adenosyl-L-methionine-dependent protein-lysine N-methyltransferase that monomethylates 60S ribosomal protein L42 (rpl42) at 'Lys-55'. The polypeptide is Ribosomal lysine N-methyltransferase 4 (Schizosaccharomyces pombe (strain 972 / ATCC 24843) (Fission yeast)).